Reading from the N-terminus, the 184-residue chain is Alpha-tubulin N-acetyltransferase (184 aa).

Residues 1 to 174 (MNIPPEKMHN…NNFVIFAEYF (174 aa)) form the N-acetyltransferase domain. Acetyl-CoA contacts are provided by residues 108-121 (FYIQ…GLGL) and 144-153 (SYKLQSFLKK).

It belongs to the acetyltransferase ATAT1 family.

It catalyses the reaction L-lysyl-[alpha-tubulin] + acetyl-CoA = N(6)-acetyl-L-lysyl-[alpha-tubulin] + CoA + H(+). Functionally, specifically acetylates 'Lys-40' in alpha-tubulin on the lumenal side of microtubules. Promotes microtubule destabilization and accelerates microtubule dynamics; this activity may be independent of acetylation activity. Acetylates alpha-tubulin with a slow enzymatic rate, due to a catalytic site that is not optimized for acetyl transfer. Enters the microtubule through each end and diffuses quickly throughout the lumen of microtubules. Acetylates only long/old microtubules because of its slow acetylation rate since it does not have time to act on dynamically unstable microtubules before the enzyme is released. The polypeptide is Alpha-tubulin N-acetyltransferase (Plasmodium knowlesi (strain H)).